The following is a 198-amino-acid chain: Imidazole glycerol phosphate synthase subunit HisH (198 aa).

In terms of domain architecture, Glutamine amidotransferase type-1 spans 1–194 (MIAIIDYGLG…LKGGFQDDQT (194 aa)). The active-site Nucleophile is the cysteine 77. Active-site residues include histidine 169 and glutamate 171.

In terms of assembly, heterodimer of HisH and HisF.

It localises to the cytoplasm. It carries out the reaction 5-[(5-phospho-1-deoxy-D-ribulos-1-ylimino)methylamino]-1-(5-phospho-beta-D-ribosyl)imidazole-4-carboxamide + L-glutamine = D-erythro-1-(imidazol-4-yl)glycerol 3-phosphate + 5-amino-1-(5-phospho-beta-D-ribosyl)imidazole-4-carboxamide + L-glutamate + H(+). It catalyses the reaction L-glutamine + H2O = L-glutamate + NH4(+). The protein operates within amino-acid biosynthesis; L-histidine biosynthesis; L-histidine from 5-phospho-alpha-D-ribose 1-diphosphate: step 5/9. Functionally, IGPS catalyzes the conversion of PRFAR and glutamine to IGP, AICAR and glutamate. The HisH subunit catalyzes the hydrolysis of glutamine to glutamate and ammonia as part of the synthesis of IGP and AICAR. The resulting ammonia molecule is channeled to the active site of HisF. The polypeptide is Imidazole glycerol phosphate synthase subunit HisH (Staphylococcus saprophyticus subsp. saprophyticus (strain ATCC 15305 / DSM 20229 / NCIMB 8711 / NCTC 7292 / S-41)).